Here is a 111-residue protein sequence, read N- to C-terminus: MGMPNLGDMMKQIQQAGEKMQDVQKQLEKIVAYGEAGGGMVKVSVNGKQKLLTLQIDPDIMDDAEMVQDLVIAAVNSALDEAAKVAQEELVKVTGGMMNPADILKNLNLGK.

It belongs to the YbaB/EbfC family. Homodimer.

It is found in the cytoplasm. It localises to the nucleoid. Functionally, binds to DNA and alters its conformation. May be involved in regulation of gene expression, nucleoid organization and DNA protection. This chain is Nucleoid-associated protein Cpha266_1171, found in Chlorobium phaeobacteroides (strain DSM 266 / SMG 266 / 2430).